The primary structure comprises 382 residues: Gap junction alpha-1 protein (382 aa).

Over 2 to 23 (GDWSALGKLLDKVQAYSTAGGK) the chain is Cytoplasmic. Ser-5 carries the post-translational modification Phosphoserine. Residues 24-44 (VWLSVLFIFRILLLGTAVESA) form a helical membrane-spanning segment. The Extracellular portion of the chain corresponds to 45-76 (WGDEQSAFRCNTQQPGCENVCYDKSFPISHVR). Intrachain disulfides connect Cys-54-Cys-192 and Cys-187-Cys-198. Residues 77 to 97 (FWVLQIIFVSVPTLLYLAHVF) traverse the membrane as a helical segment. Residues 98 to 155 (YVMRKEEKLNKKEEELKVAQTDGVNVEMHLKQIEIKKFKYGIEEHGKVKMRGGLLRTY) are Cytoplasmic-facing. Lys-144 is covalently cross-linked (Glycyl lysine isopeptide (Lys-Gly) (interchain with G-Cter in SUMO)). The helical transmembrane segment at 156–176 (IISILFKSVFEVAFLLIQWYI) threads the bilayer. Topologically, residues 177-207 (YGFSLSAVYTCKRDPCPHQVDCFLSRPTEKT) are extracellular. Residues 208–228 (IFIIFMLVVSLVSLALNIIEL) form a helical membrane-spanning segment. The Cytoplasmic portion of the chain corresponds to 229–382 (FYVFFKGVKD…SRPRPDDLEI (154 aa)). Lys-237 participates in a covalent cross-link: Glycyl lysine isopeptide (Lys-Gly) (interchain with G-Cter in SUMO). The tract at residues 244–382 (SDPYHATTGP…SRPRPDDLEI (139 aa)) is interaction with NOV. Residue Tyr-247 is modified to Phosphotyrosine. Phosphoserine is present on residues Ser-255, Ser-257, and Ser-262. An interaction with UBQLN4 region spans residues 264–382 (KYAYFNGCSS…SRPRPDDLEI (119 aa)). S-nitrosocysteine is present on Cys-271. Phosphothreonine is present on Thr-275. A phosphoserine mark is found at Ser-306, Ser-314, and Ser-325. Over residues 317-332 (QNRMGQAGSTISNSHA) the composition is skewed to polar residues. The disordered stretch occupies residues 317–382 (QNRMGQAGST…SRPRPDDLEI (66 aa)). Thr-326 carries the phosphothreonine modification. Residues Ser-328, Ser-330, and Ser-365 each carry the phosphoserine modification. A compositionally biased stretch (low complexity) spans 362–374 (RPSSRASSRASSR). Ser-368 is subject to Phosphoserine; by PKC/PRKCG and PKC/PRKCD. Residues Ser-369 and Ser-373 each carry the phosphoserine modification.

The protein belongs to the connexin family. Alpha-type (group II) subfamily. As to quaternary structure, a connexon is composed of a hexamer of connexins. Interacts with SGSM3. Interacts with RIC1/CIP150. Interacts with CNST and CSNK1D. Interacts (via C-terminus) with TJP1. Interacts (via C-terminus) with SRC (via SH3 domain). Interacts (not ubiquitinated) with UBQLN4 (via UBA domain). Interacts with NOV. Interacts with TMEM65. Interacts with ANK3/ANKG and PKP2. Contains at least one intramolecular disulfide bond. In terms of processing, phosphorylation at Ser-325, Ser-328 and Ser-330 by CK1 modulates gap junction assembly. Phosphorylated at Ser-368 by PRKCG; phosphorylation induces disassembly of gap junction plaques and inhibition of gap junction activity. Phosphorylation at Ser-368 by PRKCD triggers its internalization into small vesicles leading to proteasome-mediated degradation. Post-translationally, sumoylated with SUMO1, SUMO2 and SUMO3, which may regulate the level of functional Cx43 gap junctions at the plasma membrane. May be desumoylated by SENP1 or SENP2. S-nitrosylation at Cys-271 is enriched at the muscle endothelial gap junction in arteries, it augments channel permeability and may regulate of smooth muscle cell to endothelial cell communication. In terms of processing, acetylated in the developing cortex; leading to delocalization from the cell membrane. Detected in ventricle and atrium (at protein level).

It localises to the cell membrane. It is found in the cell junction. Its subcellular location is the gap junction. The protein resides in the endoplasmic reticulum. Gap junction protein that acts as a regulator of bladder capacity. A gap junction consists of a cluster of closely packed pairs of transmembrane channels, the connexons, through which materials of low MW diffuse from one cell to a neighboring cell. Negative regulator of bladder functional capacity: acts by enhancing intercellular electrical and chemical transmission, thus sensitizing bladder muscles to cholinergic neural stimuli and causing them to contract. May play a role in cell growth inhibition through the regulation of NOV expression and localization. Plays an essential role in gap junction communication in the ventricles. This chain is Gap junction alpha-1 protein (Gja1), found in Rattus norvegicus (Rat).